Here is a 1216-residue protein sequence, read N- to C-terminus: Coatomer subunit alpha-1 (1216 aa).

8 WD repeats span residues 7-48 (TKSN…DRFD), 49-88 (EHEGPVRGVHFHNSQPLFVSGGDDYKIKVWNYKNHRCLFT), 91-132 (GHLD…SVLT), 133-172 (GHNHYVMCASFHPKEDLVVSASLDQTVRVWDIGALRKKTV), 202-241 (GHDRGVNWAAFHPTLPLIVSGADDRQVKLWRMNETKAWEV), 246-285 (GHMNNVSSVMFHAKQDIIVSNSEDKSIRVWDATKRTGLQT), 288-326 (REHDRFWILAVHPEMNLLAAGHDSGMIVFKLERERPAFA), and 363-404 (SLNQ…VGRS).

In terms of assembly, oligomeric complex that consists of at least the alpha, beta, beta', gamma, delta, epsilon and zeta subunits.

The protein resides in the cytoplasm. The protein localises to the golgi apparatus membrane. It localises to the cytoplasmic vesicle. It is found in the COPI-coated vesicle membrane. Its function is as follows. The coatomer is a cytosolic protein complex that binds to dilysine motifs and reversibly associates with Golgi non-clathrin-coated vesicles, which further mediate biosynthetic protein transport from the ER, via the Golgi up to the trans Golgi network. Coatomer complex is required for budding from Golgi membranes, and is essential for the retrograde Golgi-to-ER transport of dilysine-tagged proteins. The sequence is that of Coatomer subunit alpha-1 from Arabidopsis thaliana (Mouse-ear cress).